A 358-amino-acid polypeptide reads, in one-letter code: MAGFQSSEVDPNTKNKNAEEMFNELNKVPFFMQSLEDVGDESENNVQLDALKALAYEGEPHEVAQNFREHGNECFASKRYKDAEEFYTKALAQKCGDKDIEIACYSNRAACNLLFENYRQVLNDCAQVLQRDSTHAKAYYRSAKALVALKRYDEAKECIRLCSLVHPNDPAILALSKELQKKSDDFEKRESEKKRVAQEKVIAAKTVLLALQERHIKTKTTEHPPDLGDAMISLSTFDDPKSELFFPTILLYPLVYQSDFVPSVSENCTPLELLKTVFQSPAPWDVHQLYNPDSLDVFATTDTLGLIKVGKNVPILKALTHPKVTLIDGLVQLHVVPHHLASDWISSWKKNKQENAKN.

TPR repeat units follow at residues 64–97, 102–135, 136–169, and 221–255; these read AQNF…KCGD, IACY…DSTH, AKAY…HPND, and TEHP…YPLV.

It belongs to the TTC4 family. As to quaternary structure, monomer. Component of Hsp70 and Hsp90 chaperone complexes.

It is found in the cytoplasm. The protein localises to the nucleus. Functionally, co-chaperone that binds to the molecular chaperones Hsp90 and Hsp70. Stimulates Hsp70 ATPase activity, but not Hsp90 ATPase activity. Involved in only a subset of Hsp90 functions. The protein is Hsp70/Hsp90 co-chaperone cns1 (cns1) of Schizosaccharomyces pombe (strain 972 / ATCC 24843) (Fission yeast).